Consider the following 239-residue polypeptide: MRTLFIGDLHLSADRLDITKAFNRFLDTELDDADALYILGDLFEVWVGDDLAAPFALELARRLKQISQRLPIYFIHGNRDFMLGKQFTDAAGMQMLPEVTCLDLYGVSTVILHGDSLCTLDKAYQRFRKLRSFAFARWLYSCLPKRKRQAIANKIRSNSQSSNQQKSYVIMDVEPSAVDALFAQTHCKQMIHGHTHRPAIHNFTNGCKRIVVGDWYEQGSVLVVSADGVDLKSLPFDAS.

Residues aspartate 8, histidine 10, aspartate 41, asparagine 78, and histidine 113 each contribute to the Mn(2+) site. 78-79 is a substrate binding site; sequence NR. Positions 121, 159, 163, 166, and 194 each coordinate substrate. Residues histidine 194 and histidine 196 each contribute to the Mn(2+) site.

It belongs to the LpxH family. It depends on Mn(2+) as a cofactor.

It is found in the cell inner membrane. The catalysed reaction is UDP-2-N,3-O-bis[(3R)-3-hydroxytetradecanoyl]-alpha-D-glucosamine + H2O = 2-N,3-O-bis[(3R)-3-hydroxytetradecanoyl]-alpha-D-glucosaminyl 1-phosphate + UMP + 2 H(+). The protein operates within glycolipid biosynthesis; lipid IV(A) biosynthesis; lipid IV(A) from (3R)-3-hydroxytetradecanoyl-[acyl-carrier-protein] and UDP-N-acetyl-alpha-D-glucosamine: step 4/6. Its function is as follows. Hydrolyzes the pyrophosphate bond of UDP-2,3-diacylglucosamine to yield 2,3-diacylglucosamine 1-phosphate (lipid X) and UMP by catalyzing the attack of water at the alpha-P atom. Involved in the biosynthesis of lipid A, a phosphorylated glycolipid that anchors the lipopolysaccharide to the outer membrane of the cell. This chain is UDP-2,3-diacylglucosamine hydrolase, found in Shewanella sp. (strain MR-4).